Here is a 351-residue protein sequence, read N- to C-terminus: Apolipoprotein L4 (351 aa).

The first 21 residues, 1–21, serve as a signal peptide directing secretion; that stretch reads MEGAALLKIFVVCIWVQQNHP.

The protein belongs to the apolipoprotein L family. As to expression, widely expressed; the highest levels are in spinal cord, placenta, adrenal gland; also detected in spleen, bone marrow, uterus, trachea, mammary gland and testis; levels are low in brain, heart and pancreas.

It is found in the secreted. Its function is as follows. May play a role in lipid exchange and transport throughout the body. May participate in reverse cholesterol transport from peripheral cells to the liver. The polypeptide is Apolipoprotein L4 (APOL4) (Homo sapiens (Human)).